A 255-amino-acid polypeptide reads, in one-letter code: MRRWALRLEYDGRGFVGWQRQENGLSVQEVLETAASRLCGGDVPDSVVAGRTDAGVHAAGQVAALELPDRLDARAVREALNFHMKPHAVAVIEAAPAPSAAWSPRFSAIGRAYRYLILNRSARPALRDGFVWHVKAPLDAPAMHEAAQSLLGRHDFTSFRASSCQANSPLRTLDRLDVRRDGETVVIEAEARSFLHHQVRNMVGTLKLVGEGRWRVGRVAEALAARDRSAAGPTAPPDGLVLVAVRYEVDPFPRN.

The active-site Nucleophile is Asp53. Tyr113 is a substrate binding site.

Belongs to the tRNA pseudouridine synthase TruA family. As to quaternary structure, homodimer.

The enzyme catalyses uridine(38/39/40) in tRNA = pseudouridine(38/39/40) in tRNA. In terms of biological role, formation of pseudouridine at positions 38, 39 and 40 in the anticodon stem and loop of transfer RNAs. This is tRNA pseudouridine synthase A from Acidiphilium cryptum (strain JF-5).